The chain runs to 500 residues: Probable cytosol aminopeptidase (500 aa).

The Mn(2+) site is built by lysine 265 and aspartate 270. The active site involves lysine 277. Aspartate 288, aspartate 347, and glutamate 349 together coordinate Mn(2+). The active site involves arginine 351.

The protein belongs to the peptidase M17 family. Mn(2+) is required as a cofactor.

The protein localises to the cytoplasm. The enzyme catalyses Release of an N-terminal amino acid, Xaa-|-Yaa-, in which Xaa is preferably Leu, but may be other amino acids including Pro although not Arg or Lys, and Yaa may be Pro. Amino acid amides and methyl esters are also readily hydrolyzed, but rates on arylamides are exceedingly low.. The catalysed reaction is Release of an N-terminal amino acid, preferentially leucine, but not glutamic or aspartic acids.. Its function is as follows. Presumably involved in the processing and regular turnover of intracellular proteins. Catalyzes the removal of unsubstituted N-terminal amino acids from various peptides. The protein is Probable cytosol aminopeptidase of Rickettsia peacockii (strain Rustic).